Here is a 1705-residue protein sequence, read N- to C-terminus: Homeobox-DDT domain protein RLT1 (1705 aa).

Disordered stretches follow at residues 1 to 53 (MEMG…QLET), 118 to 167 (ELPA…EYET), 237 to 267 (HDPRPRRSHAAARSFHEQQSLDDPSSFTPNM), 296 to 322 (GPVPRSYVTPGHASRNCSTSQQDMPSP), and 352 to 414 (GVRK…RKEE). The segment at residues 39-98 (VKPKRQMKTPFQLETLEKVYSEEKYPSEATRAELSEKLDLSDRQLQMWFCHRRLKDKKDG) is a DNA-binding region (homeobox). Residues 136 to 159 (GSESGCSPYSNSRRNFASGSSSSR) show a composition bias toward low complexity. Polar residues-rich tracts occupy residues 253-265 (EQQSLDDPSSFTP) and 310-319 (RNCSTSQQDM). One can recognise a DDT domain in the interval 549–608 (DETVGNLLMVWRFLISFSDVLDLWPFTLDEFIQAFHDYDSRLLGEIHVTLLRSIIRDVED). The 70-residue stretch at 731–800 (GTVKFAAFHV…APSTYCVRAP (70 aa)) folds into the HTH HARE-type domain. Disordered stretches follow at residues 1028–1053 (TRERDSFDRDPSQLLDETKPLEDLSN), 1198–1229 (VNHSPTDSVSPSSSAISGSNSDSMETSTSIRV), 1441–1502 (PEDE…KAQS), 1561–1635 (PKSE…FVDY), and 1652–1705 (AIEE…SSDS). Residues 1201–1220 (SPTDSVSPSSSAISGSNSDS) are compositionally biased toward low complexity. A compositionally biased stretch (basic and acidic residues) spans 1455–1465 (SPFKGKGPREQ). Composition is skewed to acidic residues over residues 1565 to 1574 (EVEEDEEEEE), 1611 to 1628 (VDDESDNSVGVESEDEDG), and 1669 to 1684 (GEDDAEMSESSEDDDV).

Interacts with CHR11 and CHR17. Interacts (via the DDT domain) with CHR11 (via C-terminus). As to expression, highly expressed in growing tissues such as inflorescence and flower meristems, young leaves and floral organs. Expressed in roots, rosette and cauline leaves, stems, flowers, inflorescences and siliques.

It is found in the nucleus. Functionally, transcriptional regulator required for the maintenance of the plant vegetative phase. In association with CHR11 or CHR17 may prevent the early activation of the vegetative-to-reproductive transition by regulating key genes that contribute to flower timing, such as FT, SEP1, SEP3, AGL8/FUL, SOC1 and FLC. The sequence is that of Homeobox-DDT domain protein RLT1 from Arabidopsis thaliana (Mouse-ear cress).